The primary structure comprises 221 residues: MNFLTNQLLIQEEIEALIKNLNKENTLWEDGKKTAGSHASMVKNNLQLNRESEISKKLSHLIKKKILSSPLIKSFALPKIIHGIMFTKSLKDMQYGRHIDNPFMSSGRADLSFTISLTDKNTYDGGELIIEEMNSEKEFKLNAGEIIIYPSTYLHSVKEIKNGERLVCVGWIESYVKSIEQREYLFDLDAGAKGLLAKNGRSDELDLIFKSYSNLLRLLGN.

Residues 80–174 (IIHGIMFTKS…RLVCVGWIES (95 aa)) enclose the Fe2OG dioxygenase domain. His98, Asp100, and His155 together coordinate Fe cation. Arg165 lines the 2-oxoglutarate pocket.

The cofactor is Fe(2+). L-ascorbate serves as cofactor.

In Prochlorococcus marinus (strain MIT 9312), this protein is PKHD-type hydroxylase PMT9312_1262.